A 233-amino-acid chain; its full sequence is Translation initiation factor IF-3 (233 aa).

Disordered stretches follow at residues 1-21 (MAIQ…RTNR) and 184-233 (LQSQ…AAQR). Residues 193–211 (AAAAAAPAAAPAAPAAGAP) show a composition bias toward low complexity. Residues 212–223 (APAPAPAAPAPA) show a composition bias toward pro residues. Positions 224–233 (PAAADPAAQR) are enriched in low complexity.

This sequence belongs to the IF-3 family. As to quaternary structure, monomer.

It is found in the cytoplasm. In terms of biological role, IF-3 binds to the 30S ribosomal subunit and shifts the equilibrium between 70S ribosomes and their 50S and 30S subunits in favor of the free subunits, thus enhancing the availability of 30S subunits on which protein synthesis initiation begins. This is Translation initiation factor IF-3 from Anaeromyxobacter dehalogenans (strain 2CP-C).